The primary structure comprises 335 residues: NADH-quinone oxidoreductase subunit H (335 aa).

A run of 8 helical transmembrane segments spans residues 11 to 31, 81 to 101, 114 to 134, 154 to 174, 187 to 207, 238 to 258, 270 to 290, and 309 to 329; these read VIIS…AGAL, VIFT…FAVI, IGLL…LFAG, VSYE…VGSF, LWFI…GVAV, FFVG…TLFF, QLAF…FILL, and FCLP…LLNT.

Belongs to the complex I subunit 1 family. As to quaternary structure, NDH-1 is composed of 13 different subunits. Subunits NuoA, H, J, K, L, M, N constitute the membrane sector of the complex.

The protein resides in the cell inner membrane. It carries out the reaction a quinone + NADH + 5 H(+)(in) = a quinol + NAD(+) + 4 H(+)(out). Its function is as follows. NDH-1 shuttles electrons from NADH, via FMN and iron-sulfur (Fe-S) centers, to quinones in the respiratory chain. The immediate electron acceptor for the enzyme in this species is believed to be ubiquinone. Couples the redox reaction to proton translocation (for every two electrons transferred, four hydrogen ions are translocated across the cytoplasmic membrane), and thus conserves the redox energy in a proton gradient. This subunit may bind ubiquinone. This Pseudomonas fluorescens (strain SBW25) protein is NADH-quinone oxidoreductase subunit H.